A 311-amino-acid polypeptide reads, in one-letter code: Putative dihydroorotate dehydrogenase A (fumarate) (311 aa).

Residues Lys45, 69-73, and Asn128 contribute to the substrate site; that span reads NSMGL. 45–46 contacts FMN; the sequence is KT. FMN is bound at residue Asn128. Residue Cys131 is the Nucleophile of the active site. FMN is bound by residues Lys165 and Val193. 194–195 serves as a coordination point for substrate; it reads NS. FMN contacts are provided by residues Gly220, 248-249, and 270-271; these read GG and GT.

Belongs to the dihydroorotate dehydrogenase family. Type 1 subfamily. As to quaternary structure, homodimer. Requires FMN as cofactor.

It localises to the cytoplasm. The catalysed reaction is (S)-dihydroorotate + fumarate = orotate + succinate. It functions in the pathway pyrimidine metabolism; UMP biosynthesis via de novo pathway. Its function is as follows. Catalyzes the conversion of dihydroorotate to orotate with fumarate as the electron acceptor. In Streptococcus uberis (strain ATCC BAA-854 / 0140J), this protein is Putative dihydroorotate dehydrogenase A (fumarate) (pyrD).